A 341-amino-acid chain; its full sequence is Ferrochelatase (341 aa).

Fe cation is bound by residues His-196 and Glu-277.

It belongs to the ferrochelatase family.

The protein localises to the cytoplasm. It carries out the reaction heme b + 2 H(+) = protoporphyrin IX + Fe(2+). Its pathway is porphyrin-containing compound metabolism; protoheme biosynthesis; protoheme from protoporphyrin-IX: step 1/1. Its function is as follows. Catalyzes the ferrous insertion into protoporphyrin IX. The protein is Ferrochelatase of Synechococcus sp. (strain JA-3-3Ab) (Cyanobacteria bacterium Yellowstone A-Prime).